The primary structure comprises 294 residues: MAAAVSGVVRRVEELGDLAQAHIQHLSEAAGEDDHFLIRASAALEKLKLLCGEEKECSNPSNLLELYTQAILDMTYFEENKLVDEDFPEDCSPQKVKELLAFLSEPEILAKESNMHPKLCGLLGAELLECLSWRRGALLYMYCHSLTKRREWLLRKSNLLQKYLVDGINYLLQMLNYRCPVQLNEGVSFQDLDTAKLLSTGVFSDIHVLAMMYSGEMCYWGLKHCTDQQSENHEVDTDVFGASCTTHKETLDFREVGEKILKKYVSVCEGPLKEQEWNTANAKQILSFFQQRCS.

Residue Ala2 is modified to N-acetylalanine.

This sequence belongs to the RIMOC1 family. Interacts with the MON1A-CCZ1B complex. Interacts with GDP-bound RAB7A and promotes its interaction with the MON1A-CCZ1B complex.

The protein resides in the cytoplasm. It is found in the cytosol. Plays an important role in the removal of damaged mitochondria via mitophagy by controlling the stability and localization of RAB7A. Required for the recruitment of RAB7A and ATG9A vesicles to damaged mitochondria and promotes the stability of RAB7A by inhibiting its proteasomal degradation during mitophagy. This is RAB7A-interacting MON1-CCZ1 complex subunit 1 from Mus musculus (Mouse).